The chain runs to 128 residues: Sulfurtransferase TusD (128 aa).

Cysteine 78 serves as the catalytic Cysteine persulfide intermediate.

It belongs to the DsrE/TusD family. As to quaternary structure, heterohexamer, formed by a dimer of trimers. The hexameric TusBCD complex contains 2 copies each of TusB, TusC and TusD. The TusBCD complex interacts with TusE.

It localises to the cytoplasm. Functionally, part of a sulfur-relay system required for 2-thiolation of 5-methylaminomethyl-2-thiouridine (mnm(5)s(2)U) at tRNA wobble positions. Accepts sulfur from TusA and transfers it in turn to TusE. The protein is Sulfurtransferase TusD of Escherichia fergusonii (strain ATCC 35469 / DSM 13698 / CCUG 18766 / IAM 14443 / JCM 21226 / LMG 7866 / NBRC 102419 / NCTC 12128 / CDC 0568-73).